Reading from the N-terminus, the 280-residue chain is F-actin-capping protein subunit alpha (280 aa).

This sequence belongs to the F-actin-capping protein alpha subunit family. As to quaternary structure, heterodimer of an alpha and a beta subunit.

It localises to the cytoplasm. It is found in the cytoskeleton. In terms of biological role, F-actin-capping proteins bind in a Ca(2+)-independent manner to the fast growing ends of actin filaments (barbed end) thereby blocking the exchange of subunits at these ends. Unlike other capping proteins (such as gelsolin and severin), these proteins do not sever actin filaments. This Candida albicans (strain SC5314 / ATCC MYA-2876) (Yeast) protein is F-actin-capping protein subunit alpha (CAP01).